Here is a 298-residue protein sequence, read N- to C-terminus: MLYQQISQNKQRTVVLLVVFFALLALIGASAGYLLLDNYAMGLVLALVIGVIYATSMIFQSTSLVMSMNSAREVTEKEAPGFFHIVEDMAMVAQIPMPRVFIIEDPSLNAFATGSSPQNAAVAATTGLLEVMNREELEGVIGHEISHIRNYDIRISTIAVALASAVTVISSIGGRMLWYGGGSRRQRDDGDDDVLRIITLLLSLLSLLLAPLVASLIQLAISRQREYLADASSVELTRNPQGMIKALEKLQLSQPMKHPVDDASAALYINEPRKKRSFSSLFSTHPPIEERIERLKNM.

The next 2 membrane-spanning stretches (helical) occupy residues 14–34 (VVLL…AGYL) and 39–59 (YAMG…SMIF). Residue His-143 participates in Zn(2+) binding. Residue Glu-144 is part of the active site. A Zn(2+)-binding site is contributed by His-147. Helical transmembrane passes span 158-178 (IAVA…RMLW) and 197-217 (IITL…ASLI). Residue Glu-226 coordinates Zn(2+).

This sequence belongs to the peptidase M48B family. Requires Zn(2+) as cofactor.

It localises to the cell membrane. In Streptococcus pyogenes serotype M3 (strain SSI-1), this protein is Protease HtpX homolog.